Here is a 156-residue protein sequence, read N- to C-terminus: 6,7-dimethyl-8-ribityllumazine synthase (156 aa).

5-amino-6-(D-ribitylamino)uracil is bound by residues Phe22, Ala57–Glu59, and Thr81–Ile83. Gly86–Thr87 serves as a coordination point for (2S)-2-hydroxy-3-oxobutyl phosphate. His89 (proton donor) is an active-site residue. Position 114 (Phe114) interacts with 5-amino-6-(D-ribitylamino)uracil. A (2S)-2-hydroxy-3-oxobutyl phosphate-binding site is contributed by Arg128.

This sequence belongs to the DMRL synthase family. As to quaternary structure, forms an icosahedral capsid composed of 60 subunits, arranged as a dodecamer of pentamers.

The catalysed reaction is (2S)-2-hydroxy-3-oxobutyl phosphate + 5-amino-6-(D-ribitylamino)uracil = 6,7-dimethyl-8-(1-D-ribityl)lumazine + phosphate + 2 H2O + H(+). Its pathway is cofactor biosynthesis; riboflavin biosynthesis; riboflavin from 2-hydroxy-3-oxobutyl phosphate and 5-amino-6-(D-ribitylamino)uracil: step 1/2. Its function is as follows. Catalyzes the formation of 6,7-dimethyl-8-ribityllumazine by condensation of 5-amino-6-(D-ribitylamino)uracil with 3,4-dihydroxy-2-butanone 4-phosphate. This is the penultimate step in the biosynthesis of riboflavin. The polypeptide is 6,7-dimethyl-8-ribityllumazine synthase (Yersinia enterocolitica serotype O:8 / biotype 1B (strain NCTC 13174 / 8081)).